The following is a 1158-amino-acid chain: ATP-dependent helicase/deoxyribonuclease subunit B (1158 aa).

One can recognise a UvrD-like helicase ATP-binding domain in the interval 1 to 275 (MTLHAYLGRA…QYFNQLYRFN (275 aa)). Residue 8 to 15 (GRAGTGKS) coordinates ATP. One can recognise a UvrD-like helicase C-terminal domain in the interval 269 to 583 (NQLYRFNNQD…SIGTMDLAKV (315 aa)). Residues C784, C1112, C1115, and C1121 each coordinate [4Fe-4S] cluster.

This sequence belongs to the helicase family. AddB/RexB type 1 subfamily. In terms of assembly, heterodimer of AddA and AddB. It depends on Mg(2+) as a cofactor. Requires [4Fe-4S] cluster as cofactor.

The heterodimer acts as both an ATP-dependent DNA helicase and an ATP-dependent, dual-direction single-stranded exonuclease. Recognizes the chi site generating a DNA molecule suitable for the initiation of homologous recombination. The AddB subunit has 5' -&gt; 3' nuclease activity but not helicase activity. The sequence is that of ATP-dependent helicase/deoxyribonuclease subunit B from Staphylococcus aureus (strain MRSA252).